A 239-amino-acid polypeptide reads, in one-letter code: Interleukin-27 subunit alpha (239 aa).

The first 28 residues, 1–28 (MGQMADDLGWRLSLLLLSLLLARAGVWG), serve as a signal peptide directing secretion. The N-linked (GlcNAc...) asparagine glycan is linked to Asn89. The tract at residues 167–186 (EEENEAGRELLPGAPGGPSK) is disordered.

The protein belongs to the IL-6 superfamily. In terms of assembly, heterodimer with EBI3; not disulfide-linked. This heterodimer is known as interleukin IL-27. O-glycosylated.

It localises to the secreted. Functionally, associates with EBI3 to form the IL-27 interleukin, a heterodimeric cytokine which functions in innate immunity. Cytokine with pro- and anti-inflammatory properties, that can regulate T-helper cell development, suppress T-cell proliferation, stimulate cytotoxic T-cell activity, induce isotype switching in B-cells, and that has diverse effects on innate immune cells. Among its target cells are CD4 T-helper cells which can differentiate in type 1 effector cells (TH1), type 2 effector cells (TH2) and IL17 producing helper T-cells (TH17). It drives rapid clonal expansion of naive but not memory CD4 T-cells. It also strongly synergizes with IL-12 to trigger interferon-gamma/IFN-gamma production of naive CD4 T-cells, binds to the cytokine receptor WSX-1/TCCR which appears to be required but not sufficient for IL-27-mediated signal transduction. IL-27 potentiate the early phase of TH1 response and suppress TH2 and TH17 differentiation. It induces the differentiation of TH1 cells via two distinct pathways, p38 MAPK/TBX21- and ICAM1/ITGAL/ERK-dependent pathways. It also induces STAT1, STAT3, STAT4 and STAT5 phosphorylation and activates TBX21/T-Bet via STAT1 with resulting IL12RB2 up-regulation, an event crucial to TH1 cell commitment. It suppresses the expression of GATA3, the inhibitor TH1 cells development. In CD8 T-cells, it activates STATs as well as GZMB. IL-27 reveals to be a potent inhibitor of TH17 cell development and of IL-17 production. Indeed IL27 alone is also able to inhibit the production of IL17 by CD4 and CD8 T-cells. While IL-27 suppressed the development of pro-inflammatory Th17 cells via STAT1, it inhibits the development of anti-inflammatory inducible regulatory T-cells, iTreg, independently of STAT1. IL-27 also has an effect on cytokine production, it suppresses pro-inflammatory cytokine production such as IL2, IL4, IL5 and IL6 and activates suppressors of cytokine signaling such as SOCS1 and SOCS3. Apart from suppression of cytokine production, IL-27 also antagonizes the effects of some cytokines such as IL6 through direct effects on T-cells. Another important role of IL-27 is its antitumor activity as well as its antiangiogenic activity with activation of production of antiangiogenic chemokines such as IP-10/CXCL10 and MIG/CXCL9. In vein endothelial cells, it induces IRF1/interferon regulatory factor 1 and increase the expression of MHC class II transactivator/CIITA with resulting up-regulation of major histocompatibility complex class II. The sequence is that of Interleukin-27 subunit alpha (IL27) from Sus scrofa (Pig).